Reading from the N-terminus, the 297-residue chain is 33 kDa chaperonin (297 aa).

2 disulfides stabilise this stretch: Cys232–Cys234 and Cys266–Cys269.

The protein belongs to the HSP33 family. Post-translationally, under oxidizing conditions two disulfide bonds are formed involving the reactive cysteines. Under reducing conditions zinc is bound to the reactive cysteines and the protein is inactive.

Its subcellular location is the cytoplasm. Its function is as follows. Redox regulated molecular chaperone. Protects both thermally unfolding and oxidatively damaged proteins from irreversible aggregation. Plays an important role in the bacterial defense system toward oxidative stress. The sequence is that of 33 kDa chaperonin from Pseudomonas paraeruginosa (strain DSM 24068 / PA7) (Pseudomonas aeruginosa (strain PA7)).